The primary structure comprises 217 residues: Large ribosomal subunit protein uL3 (217 aa).

Residues 133 to 145 (GRASHGNSRSHNV) are compositionally biased toward polar residues. The tract at residues 133–153 (GRASHGNSRSHNVPGSIGMAQ) is disordered. Position 153 is an N5-methylglutamine (Gln-153).

The protein belongs to the universal ribosomal protein uL3 family. As to quaternary structure, part of the 50S ribosomal subunit. Forms a cluster with proteins L14 and L19. Methylated by PrmB.

Its function is as follows. One of the primary rRNA binding proteins, it binds directly near the 3'-end of the 23S rRNA, where it nucleates assembly of the 50S subunit. In Ralstonia pickettii (strain 12J), this protein is Large ribosomal subunit protein uL3.